We begin with the raw amino-acid sequence, 670 residues long: Proline-rich receptor-like protein kinase PERK5 (670 aa).

The segment at 1 to 181 (MADSPVDSSP…SGDSDSSSGN (181 aa)) is disordered. Topologically, residues 1-186 (MADSPVDSSP…SSSGNHPQAN (186 aa)) are extracellular. Residues 14 to 31 (TSNGTPPSNGTSPSNESS) are compositionally biased toward low complexity. Residues asparagine 22 and asparagine 28 are each glycosylated (N-linked (GlcNAc...) asparagine). 2 stretches are compositionally biased toward pro residues: residues 32-62 (PPTPPSSPPPSSISAPPPDISASFSPPPAPP) and 84-109 (PQTPENPSPPAPEGSTPVTPPAPPQT). Residue asparagine 130 is glycosylated (N-linked (GlcNAc...) asparagine). The span at 132 to 141 (TNGGNNNRDG) shows a compositional bias: low complexity. Asparagine 151 carries N-linked (GlcNAc...) asparagine glycosylation. Residues 167–181 (SPPQNSGDSDSSSGN) show a composition bias toward low complexity. A helical membrane pass occupies residues 187–207 (IGLIIGVLVGAGLLLLLAVCI). Residues 208-670 (CICCNRKKKK…RGSMKRNPQL (463 aa)) lie on the Cytoplasmic side of the membrane. Threonine 301 bears the Phosphothreonine mark. Positions 312–590 (FAQSNLLGQG…VRALEGDMSM (279 aa)) constitute a Protein kinase domain. ATP-binding positions include 318–326 (LGQGGFGYV) and lysine 340. Tyrosine 385 carries the post-translational modification Phosphotyrosine. The Proton acceptor role is filled by aspartate 436. Phosphoserine is present on serine 469. A phosphothreonine mark is found at threonine 470 and threonine 475. At tyrosine 483 the chain carries Phosphotyrosine. Disordered regions lie at residues 589-613 (SMDDLSEGTRPGQSTYLSPGSVSSE) and 635-670 (EYQSSEYGGTSEYGLNPSASSSEEMNRGSMKRNPQL). A compositionally biased stretch (polar residues) spans 599-613 (PGQSTYLSPGSVSSE).

It belongs to the protein kinase superfamily. Ser/Thr protein kinase family. In terms of tissue distribution, mostly expressed in flower buds.

The protein localises to the cell membrane. The catalysed reaction is L-seryl-[protein] + ATP = O-phospho-L-seryl-[protein] + ADP + H(+). The enzyme catalyses L-threonyl-[protein] + ATP = O-phospho-L-threonyl-[protein] + ADP + H(+). This chain is Proline-rich receptor-like protein kinase PERK5 (PERK5), found in Arabidopsis thaliana (Mouse-ear cress).